Here is a 365-residue protein sequence, read N- to C-terminus: Solute carrier family 35 member G1 (365 aa).

Residues 1–33 (MRPQDSTGVAELQEPGLPLTDDAPPGATEEPAA) are disordered. Low complexity predominate over residues 23-33 (APPGATEEPAA). Transmembrane regions (helical) follow at residues 69–89 (GLGL…SLFV), 97–117 (AVEI…PCLI), 131–151 (IFLI…YYAY), 156–176 (LADA…FAWI), 187–207 (ALFT…PFLF), 222–242 (LKGT…LVIL), 252–272 (FLSI…ILSV), 286–306 (LFLI…TKAL), 311–333 (AGPV…IIFF), and 338–357 (TWWT…GAAI). EamA domains are found at residues 80-202 (FLFS…LIVR) and 233-357 (VFAA…GAAI).

This sequence belongs to the TMEM20 family. Interacts with STIM1; stimulated by depletion of intracellular calcium. Interacts with ORAI1. Interacts with the plasma membrane calcium-transporting ATPases ATP2B1 and ATP2B4. Interacts with ATP1A1, ATP2A2, KPNB1 and XPO1. Ubiquitously expressed.

The protein localises to the cell membrane. The protein resides in the endoplasmic reticulum membrane. In terms of biological role, may play a role in intracellular calcium sensing and homeostasis. May act as a negative regulator of plasma membrane calcium-transporting ATPases preventing calcium efflux from the cell. This Homo sapiens (Human) protein is Solute carrier family 35 member G1 (SLC35G1).